We begin with the raw amino-acid sequence, 214 residues long: Thiamine import ATP-binding protein ThiQ (214 aa).

In terms of domain architecture, ABC transporter spans 2-212 (IKLNTIFDYP…KNGQATEREI (211 aa)). Position 31–38 (31–38 (GESGAGKS)) interacts with ATP.

The protein belongs to the ABC transporter superfamily. Thiamine importer (TC 3.A.1.19.1) family. In terms of assembly, the complex is composed of two ATP-binding proteins (ThiQ), two transmembrane proteins (ThiP) and a solute-binding protein (ThiB).

Its subcellular location is the cell inner membrane. The catalysed reaction is thiamine(out) + ATP + H2O = thiamine(in) + ADP + phosphate + H(+). Part of the ABC transporter complex ThiBPQ involved in thiamine import. Responsible for energy coupling to the transport system. This Histophilus somni (strain 129Pt) (Haemophilus somnus) protein is Thiamine import ATP-binding protein ThiQ.